We begin with the raw amino-acid sequence, 303 residues long: Ribosomal large subunit pseudouridine synthase C (303 aa).

Positions 11–87 (FRLDKYLKRL…AEIKLAKKIL (77 aa)) constitute an S4 RNA-binding domain. D140 is a catalytic residue.

Belongs to the pseudouridine synthase RluA family.

The enzyme catalyses uridine(955/2504/2580) in 23S rRNA = pseudouridine(955/2504/2580) in 23S rRNA. Its function is as follows. Responsible for synthesis of pseudouridine from uracil at positions 955, 2504 and 2580 in 23S ribosomal RNA. The protein is Ribosomal large subunit pseudouridine synthase C (rluC) of Rickettsia prowazekii (strain Madrid E).